The chain runs to 102 residues: Thioredoxin (102 aa).

In terms of domain architecture, Thioredoxin spans methionine 1–alanine 102. Cysteines 28 and 31 form a disulfide.

This sequence belongs to the thioredoxin family.

In terms of biological role, participates in various redox reactions through the reversible oxidation of its active center dithiol to a disulfide and catalyzes dithiol-disulfide exchange reactions. This is Thioredoxin (trxA) from Chlamydia pneumoniae (Chlamydophila pneumoniae).